A 181-amino-acid polypeptide reads, in one-letter code: Protein GrpE (181 aa).

Polar residues predominate over residues 1 to 20 (MENTQENPASQSAEENGSET). Residues 1 to 39 (MENTQENPASQSAEENGSETQAAQDAAPAAEAADAALAE) form a disordered region. Residues 21–39 (QAAQDAAPAAEAADAALAE) show a composition bias toward low complexity.

Belongs to the GrpE family. As to quaternary structure, homodimer.

The protein resides in the cytoplasm. In terms of biological role, participates actively in the response to hyperosmotic and heat shock by preventing the aggregation of stress-denatured proteins, in association with DnaK and GrpE. It is the nucleotide exchange factor for DnaK and may function as a thermosensor. Unfolded proteins bind initially to DnaJ; upon interaction with the DnaJ-bound protein, DnaK hydrolyzes its bound ATP, resulting in the formation of a stable complex. GrpE releases ADP from DnaK; ATP binding to DnaK triggers the release of the substrate protein, thus completing the reaction cycle. Several rounds of ATP-dependent interactions between DnaJ, DnaK and GrpE are required for fully efficient folding. This Burkholderia multivorans (strain ATCC 17616 / 249) protein is Protein GrpE.